We begin with the raw amino-acid sequence, 171 residues long: Galectin-related protein A (171 aa).

Positions 38-170 (PFCGHIKGGL…INGDLQLTKL (133 aa)) constitute a Galectin domain.

In terms of biological role, does not bind lactose, and may not bind carbohydrates. The sequence is that of Galectin-related protein A (lgalsl-a) from Xenopus laevis (African clawed frog).